A 99-amino-acid polypeptide reads, in one-letter code: Putative pterin-4-alpha-carbinolamine dehydratase (99 aa).

The protein belongs to the pterin-4-alpha-carbinolamine dehydratase family.

It carries out the reaction (4aS,6R)-4a-hydroxy-L-erythro-5,6,7,8-tetrahydrobiopterin = (6R)-L-erythro-6,7-dihydrobiopterin + H2O. This Saccharolobus islandicus (strain M.16.27) (Sulfolobus islandicus) protein is Putative pterin-4-alpha-carbinolamine dehydratase.